A 122-amino-acid polypeptide reads, in one-letter code: Large ribosomal subunit protein uL14 (122 aa).

It belongs to the universal ribosomal protein uL14 family. As to quaternary structure, part of the 50S ribosomal subunit. Forms a cluster with proteins L3 and L19. In the 70S ribosome, L14 and L19 interact and together make contacts with the 16S rRNA in bridges B5 and B8.

Binds to 23S rRNA. Forms part of two intersubunit bridges in the 70S ribosome. The sequence is that of Large ribosomal subunit protein uL14 from Moorella thermoacetica (strain ATCC 39073 / JCM 9320).